Consider the following 80-residue polypeptide: U20-ctenitoxin-Pn1a (80 aa).

7 disulfide bridges follow: C3–C20, C10–C26, C17–C52, C19–C40, C28–C38, C58–C71, and C75–C80.

As to expression, expressed by the venom gland.

It is found in the secreted. Functionally, omega-agatoxin are antagonists of voltage-gated calcium channels (Cav). Induces rapid general flaccid paralysis followed by death when injected into the cerebral ventricle of mice at dose levels of 3 ug per mouse. In Phoneutria nigriventer (Brazilian armed spider), this protein is U20-ctenitoxin-Pn1a.